Consider the following 141-residue polypeptide: UPF0310 protein Mflv_0785 (141 aa).

It belongs to the UPF0310 family.

This chain is UPF0310 protein Mflv_0785, found in Mycolicibacterium gilvum (strain PYR-GCK) (Mycobacterium gilvum (strain PYR-GCK)).